The sequence spans 463 residues: Glutathione amide reductase (463 aa).

Residues T2, Q3, and H4 each contribute to the Ni(2+) site. FAD is bound by residues 14-15 (SG), E34, and T41. A disulfide bridge links C42 with C47. FAD contacts are provided by residues K50 and 113–114 (HA). K50 contributes to the NAD(+) binding site. Residues 174 to 180 (AGYIGIE), 197 to 198 (LE), V230, and G261 contribute to the NAD(+) site. Residues D302 and 308–310 (QLT) each bind FAD. NAD(+)-binding residues include Q308 and V341. FAD is bound at residue H437. H437 serves as the catalytic Proton acceptor.

It belongs to the class-I pyridine nucleotide-disulfide oxidoreductase family. Homodimer. Requires FAD as cofactor.

The enzyme catalyses 2 glutathione amide + NAD(+) = glutathione amide disulfide + NADH + H(+). Its function is as follows. Catalyzes the reduction of glutathione amide disulfide (GASSAG) to restore glutathione amide (GASH) in the presence of NADH. May play a role in GASH metabolism under anaerobic conditions as a sulfide carrier necessary for cytoplasmic sulfide oxidation. The protein is Glutathione amide reductase of Marichromatium gracile (Chromatium gracile).